We begin with the raw amino-acid sequence, 340 residues long: UDP-3-O-acylglucosamine N-acyltransferase (340 aa).

H238 serves as the catalytic Proton acceptor.

This sequence belongs to the transferase hexapeptide repeat family. LpxD subfamily. As to quaternary structure, homotrimer.

It carries out the reaction a UDP-3-O-[(3R)-3-hydroxyacyl]-alpha-D-glucosamine + a (3R)-hydroxyacyl-[ACP] = a UDP-2-N,3-O-bis[(3R)-3-hydroxyacyl]-alpha-D-glucosamine + holo-[ACP] + H(+). It functions in the pathway bacterial outer membrane biogenesis; LPS lipid A biosynthesis. Its function is as follows. Catalyzes the N-acylation of UDP-3-O-acylglucosamine using 3-hydroxyacyl-ACP as the acyl donor. Is involved in the biosynthesis of lipid A, a phosphorylated glycolipid that anchors the lipopolysaccharide to the outer membrane of the cell. In Shewanella denitrificans (strain OS217 / ATCC BAA-1090 / DSM 15013), this protein is UDP-3-O-acylglucosamine N-acyltransferase.